A 338-amino-acid polypeptide reads, in one-letter code: MNGLGGLNKSEHGVGIGLVQLQLPVTVTPQDLARQTQVIVDLVAKARRNQPGMDLVVFPEYALHGLSMDINPDIMCRMDGPEVAAFKAACKQNRIWGCFSIMEYNPGGMPYNSGIIIDDTGALKLYYRKMHPWVPVEPWEPGDLGIPVIDGPKGAKLALIICHDGMFPEMARECAYKGAEIMIRTAGYTAPIRESWRFTNQSNAFCNLMVTANVCMCGSDGTFDSMGEGMICNFDGSIIAHGTSGRVNEIITAEVRPDLVREARLGWGVENNIYQLGHRGYVAVAGGAQDAPYTYMHDLAAGRYRLPWEVEVKITDGTACGFEKPTRLYGKPAKSAAE.

A CN hydrolase domain is found at 14–257 (VGIGLVQLQL…NEIITAEVRP (244 aa)). Glutamate 60 serves as the catalytic Proton acceptor. Residue lysine 129 is the Proton donor of the active site. The Nucleophile role is filled by cysteine 162.

It belongs to the carbon-nitrogen hydrolase superfamily. Aliphatic amidase family.

The enzyme catalyses formamide + H2O = formate + NH4(+). In terms of biological role, is an aliphatic amidase with a restricted substrate specificity, as it only hydrolyzes formamide. The polypeptide is Formamidase (Allorhizobium ampelinum (strain ATCC BAA-846 / DSM 112012 / S4) (Agrobacterium vitis (strain S4))).